We begin with the raw amino-acid sequence, 141 residues long: Large ribosomal subunit protein bL17 (141 aa).

This sequence belongs to the bacterial ribosomal protein bL17 family. In terms of assembly, part of the 50S ribosomal subunit. Contacts protein L32.

The polypeptide is Large ribosomal subunit protein bL17 (Agrobacterium fabrum (strain C58 / ATCC 33970) (Agrobacterium tumefaciens (strain C58))).